We begin with the raw amino-acid sequence, 274 residues long: NADPH-dependent 7-cyano-7-deazaguanine reductase (274 aa).

80-82 provides a ligand contact to substrate; sequence VES. Position 82–83 (82–83) interacts with NADPH; the sequence is SK. The Thioimide intermediate role is filled by C181. Residue D188 is the Proton donor of the active site. 220–221 is a substrate binding site; sequence HE. 249–250 lines the NADPH pocket; the sequence is RG.

It belongs to the GTP cyclohydrolase I family. QueF type 2 subfamily. As to quaternary structure, homodimer.

The protein resides in the cytoplasm. The catalysed reaction is 7-aminomethyl-7-carbaguanine + 2 NADP(+) = 7-cyano-7-deazaguanine + 2 NADPH + 3 H(+). It participates in tRNA modification; tRNA-queuosine biosynthesis. Catalyzes the NADPH-dependent reduction of 7-cyano-7-deazaguanine (preQ0) to 7-aminomethyl-7-deazaguanine (preQ1). The polypeptide is NADPH-dependent 7-cyano-7-deazaguanine reductase (Burkholderia pseudomallei (strain 1710b)).